The sequence spans 177 residues: FMRFamide-like neuropeptides 7 (177 aa).

Positions 1–19 are cleaved as a signal peptide; that stretch reads MLGSRFLLLALGLLVLVLA. Positions 20–49 are excised as a propeptide; the sequence is EESAEQQVQEPTELEKSGEQLSEEDLIDEQ. Positions 25-106 are disordered; sequence QQVQEPTELE…RSSMVRFGKR (82 aa). F62, F75, F89, F103, F117, and F130 each carry phenylalanine amide. A Leucine amide modification is found at L143. F157 carries the post-translational modification Phenylalanine amide. The propeptide occupies 161-177; sequence SMEFEMQSNEKNIEDSE.

The protein belongs to the FARP (FMRFamide related peptide) family. Expressed in the ASI sensory neurons, the ALA interneuron and the AVG interneuron from where secretion occurs. Expression in the ASI neurons is necessary and sufficient to maintain serotonin-induced fat loss.

Its subcellular location is the secreted. Functionally, FMRFamide-like neuropeptides. Stimulates serotonin-induced fat loss by binding to and activating the npr-22 receptor which leads to induction of the atgl-1 lipase and subsequent fat loss. Together with atfs-1, negatively regulates the expression of the transcription regulator hlh-11, to promote expression of atgl-1, and thus atgl-1-dependent fat oxidation in response to mitochondrial stress. TPMQRSSMVRF-amide: Acts as a ligand for the npr-22 receptor in vitro. In terms of biological role, SPMQRSSMVRF-amide: Acts as a ligand for the npr-22 receptor in vitro. Its function is as follows. Acts as a ligand for the npr-22 receptor in vitro. This Caenorhabditis elegans protein is FMRFamide-like neuropeptides 7.